A 425-amino-acid polypeptide reads, in one-letter code: Transmembrane protein 184A (425 aa).

The next 7 membrane-spanning stretches (helical) occupy residues 51–71 (LFLT…TALL), 96–116 (LLFI…LLGG), 133–153 (FVIY…SAIM), 189–209 (TLQF…LQAF), 226–246 (VTLV…LFYF), 261–281 (FLTI…LAIL), and 303–323 (LAAG…SLAL). The disordered stretch occupies residues 375–425 (QYTQQSTHEAPGPGQGGHPAPSTHPGPASGSGGGKKSRNIEKRMLIPSEDL). Over residues 392–402 (HPAPSTHPGPA) the composition is skewed to low complexity.

It belongs to the TMEM184 family. As to expression, expressed in testis, pancreas, parotid salivary gland and mammary gland (at protein level).

It is found in the cell membrane. It localises to the cytoplasm. The protein resides in the perinuclear region. Its subcellular location is the cytoplasmic vesicle membrane. The protein localises to the early endosome membrane. It is found in the endosome. It localises to the cytoplasmic vesicle. The protein resides in the secretory vesicle membrane. Functionally, acts as a heparin receptor in vascular cells. May be involved in vesicle transport in exocrine cells and Sertoli cells. In Mus musculus (Mouse), this protein is Transmembrane protein 184A (Tmem184a).